Consider the following 223-residue polypeptide: Proteasome subunit beta (223 aa).

A propeptide spans 1–6 (removed in mature form; by autocatalysis); that stretch reads MDTMKG. The active-site Nucleophile is Thr-7.

Belongs to the peptidase T1B family. The 20S proteasome core is composed of 14 alpha and 14 beta subunits that assemble into four stacked heptameric rings, resulting in a barrel-shaped structure. The two inner rings, each composed of seven catalytic beta subunits, are sandwiched by two outer rings, each composed of seven alpha subunits. The catalytic chamber with the active sites is on the inside of the barrel. Has a gated structure, the ends of the cylinder being occluded by the N-termini of the alpha-subunits. Is capped at one or both ends by the proteasome regulatory ATPase, PAN.

It localises to the cytoplasm. It carries out the reaction Cleavage of peptide bonds with very broad specificity.. The formation of the proteasomal ATPase PAN-20S proteasome complex, via the docking of the C-termini of PAN into the intersubunit pockets in the alpha-rings, triggers opening of the gate for substrate entry. Interconversion between the open-gate and close-gate conformations leads to a dynamic regulation of the 20S proteasome proteolysis activity. Functionally, component of the proteasome core, a large protease complex with broad specificity involved in protein degradation. In Methanocaldococcus vulcanius (strain ATCC 700851 / DSM 12094 / M7) (Methanococcus vulcanius), this protein is Proteasome subunit beta.